Consider the following 500-residue polypeptide: Autophagy-related protein 18 (500 aa).

The WD 1 repeat unit spans residues Asp-3 to Ser-41. The segment at Val-174–Leu-197 is disordered. Basic and acidic residues predominate over residues Ser-181–Ile-194. WD repeat units lie at residues Ala-243 to Gln-283 and Thr-288 to Lys-327. Positions Phe-284 to Thr-288 match the L/FRRG motif motif. Positions Leu-328–Asn-358 are disordered. Over residues Asp-331 to Ser-344 the composition is skewed to acidic residues. Phosphoserine is present on Ser-354.

This sequence belongs to the WD repeat PROPPIN family. As to quaternary structure, component of the PI(3,5)P2 regulatory complex, composed of ATG18, FIG4, FAB1, VAC14 and VAC7. VAC14 nucleates the assembly of the complex and serves as a scaffold. Interacts with ATG2, ATG9 and VAC17. The ATG2-ATG18 complex is essential for autophagosome formation.

Its subcellular location is the preautophagosomal structure membrane. The protein localises to the vacuole membrane. It is found in the endosome membrane. Functionally, the PI(3,5)P2 regulatory complex regulates both the synthesis and turnover of phosphatidylinositol 3,5-bisphosphate (PtdIns(3,5)P2). May negatively regulate FAB1 activity by sequestering or masking VAC7 from FAB1. Necessary for proper vacuole morphology. Plays an important role in osmotically-induced vacuole fragmentation. Required for cytoplasm to vacuole transport (Cvt) vesicle formation, pexophagy and starvation-induced autophagy. Involved in correct ATG9 trafficking to the pre-autophagosomal structure. Might also be involved in premeiotic DNA replication. With ATG2, protects ATG8 from ARG4-mediated cleavage. This Saccharomyces cerevisiae (strain YJM789) (Baker's yeast) protein is Autophagy-related protein 18 (ATG18).